Consider the following 143-residue polypeptide: MAKKIIGFIKLQIPAGKANPSPPVGPALGQRGLNIMEFCKAFNAQTQGMEPGLPVPVVITAFADKSFTFVMKSPPATVLIKKAAGITKGSPKPHTDKVGKITRAQAEEIAKAKNADLTAADLDAAVRTIAGSARSMGITVEGL.

Belongs to the universal ribosomal protein uL11 family. In terms of assembly, part of the ribosomal stalk of the 50S ribosomal subunit. Interacts with L10 and the large rRNA to form the base of the stalk. L10 forms an elongated spine to which L12 dimers bind in a sequential fashion forming a multimeric L10(L12)X complex. In terms of processing, one or more lysine residues are methylated.

In terms of biological role, forms part of the ribosomal stalk which helps the ribosome interact with GTP-bound translation factors. This Cupriavidus metallidurans (strain ATCC 43123 / DSM 2839 / NBRC 102507 / CH34) (Ralstonia metallidurans) protein is Large ribosomal subunit protein uL11.